The primary structure comprises 699 residues: Elongation factor G (699 aa).

The region spanning 8–283 (EHIRNIGICA…AVVDFLPSPI (276 aa)) is the tr-type G domain. GTP contacts are provided by residues 17 to 24 (AHIDAGKT), 81 to 85 (DTPGH), and 135 to 138 (NKMD).

The protein belongs to the TRAFAC class translation factor GTPase superfamily. Classic translation factor GTPase family. EF-G/EF-2 subfamily.

The protein resides in the cytoplasm. Catalyzes the GTP-dependent ribosomal translocation step during translation elongation. During this step, the ribosome changes from the pre-translocational (PRE) to the post-translocational (POST) state as the newly formed A-site-bound peptidyl-tRNA and P-site-bound deacylated tRNA move to the P and E sites, respectively. Catalyzes the coordinated movement of the two tRNA molecules, the mRNA and conformational changes in the ribosome. This chain is Elongation factor G, found in Rickettsia sibirica (strain ATCC VR-151 / 246).